Reading from the N-terminus, the 520-residue chain is Nonsense-mediated mRNA decay factor SMG9 (520 aa).

Disordered stretches follow at residues 1–94 (MSES…PAPL) and 107–143 (GKGPVAATGASTPEGTAPPPPTAPAPPKGEKEGQRPT). At Ser2 the chain carries N-acetylserine. 5 positions are modified to phosphoserine: Ser2, Ser4, Ser7, Ser32, and Ser53. A compositionally biased stretch (basic and acidic residues) spans 36 to 53 (GRERDYIAPWERERRDGS). Residues 78–94 (QPPPSTAPAAPPAPAPL) are compositionally biased toward pro residues. The span at 112–121 (AATGASTPEG) shows a compositional bias: low complexity. The span at 122–133 (TAPPPPTAPAPP) shows a compositional bias: pro residues. Ser451 bears the Phosphoserine mark.

It belongs to the SMG9 family. As to quaternary structure, self-associates to form homodimers and forms heterodimers with SMG8; these assembly forms may represent SMG1C intermediate forms. Component of the SMG1C complex composed of SMG1, SMG8 and SMG9. Interacts with DHX34; the interaction is RNA-independent. Post-translationally, phosphorylated by SMG1.

Involved in nonsense-mediated decay (NMD) of mRNAs containing premature stop codons. Is recruited by release factors to stalled ribosomes together with SMG1 and SMG8 (forming the SMG1C protein kinase complex) and, in the SMG1C complex, is required for the efficient association between SMG1 and SMG8. Plays a role in brain, heart, and eye development. The sequence is that of Nonsense-mediated mRNA decay factor SMG9 from Rattus norvegicus (Rat).